The primary structure comprises 1927 residues: Lactase/phlorizin hydrolase (1927 aa).

A signal peptide spans 1-19 (MELSWHVVFIALLSFSCWG). A propeptide spans 20–868 (SDWESDRNFI…NTVNLPSKVR (849 aa)) (XBetaGly). The Extracellular segment spans residues 20-1882 (SDWESDRNFI…LMLGTTEAQT (1863 aa)). A glycan (N-linked (GlcNAc...) asparagine) is linked at Asn42. The interval 44–286 (SGLLGDQSSN…FIFNLKLPDC (243 aa)) is glycosyl hydrolase-1 1; Region I. The glycosyl hydrolase-1 2; Region II stretch occupies residues 362 to 855 (IWEAFANQSR…GFLTKGAKRL (494 aa)). 7 N-linked (GlcNAc...) asparagine glycosylation sites follow: Asn368, Asn418, Asn512, Asn821, Asn934, Asn946, and Asn989. The interval 902–1366 (TFRDDFLWGV…EVITNNGMPL (465 aa)) is glycosyl hydrolase-1 3; Region III. Phlorizin hydrolase/glycosylceramidase activity. Glu1065 acts as the Proton donor; for phlorizin hydrolase/Glycosylceramidase activity in catalysis. The N-linked (GlcNAc...) asparagine glycan is linked to Asn1174. A disordered region spans residues 1220 to 1244 (RLNPPSYEDDQEMAEEEDPSWPSTA). Residues 1226 to 1238 (YEDDQEMAEEEDP) are compositionally biased toward acidic residues. Glu1273 (nucleophile; for phlorizin hydrolase/Glycosylceramidase activity) is an active-site residue. N-linked (GlcNAc...) asparagine glycans are attached at residues Asn1340 and Asn1508. A glycosyl hydrolase-1 4; Region IV. Lactase activity region spans residues 1373 to 1846 (LYGRFPEGFI…CNGFPDPATG (474 aa)). Glu1538 acts as the Proton donor; for lactase activity in catalysis. The required for homodimerization and transport to the plasma membrane stretch occupies residues 1647–1927 (RDRSLAAGLN…QQELSPVSSF (281 aa)). N-linked (GlcNAc...) asparagine glycans are attached at residues Asn1656 and Asn1672. Glu1749 (nucleophile; for lactase activity) is an active-site residue. 2 N-linked (GlcNAc...) asparagine glycosylation sites follow: Asn1761 and Asn1814. Residues 1883 to 1901 (ALYVLFSLVLLGVCGLAFL) form a helical membrane-spanning segment. The Cytoplasmic portion of the chain corresponds to 1902–1927 (SYKYCKRSKQGKTQRSQQELSPVSSF).

It belongs to the glycosyl hydrolase 1 family. As to quaternary structure, homodimer. Post-translationally, N-glycosylated. Specifically expressed in small intestine.

The protein resides in the apical cell membrane. It carries out the reaction lactose + H2O = beta-D-galactose + D-glucose. The enzyme catalyses phlorizin + H2O = phloretin + beta-D-glucose. It catalyses the reaction D-cellobiose + H2O = beta-D-glucose + D-glucose. The catalysed reaction is quercetin 4'-O-beta-D-glucoside + H2O = quercetin + beta-D-glucose. It carries out the reaction quercetin 3-O-beta-D-glucoside + H2O = quercetin + beta-D-glucose. The enzyme catalyses kaempferol 3-O-beta-D-glucoside + H2O = kaempferol + beta-D-glucose. It catalyses the reaction luteolin 7-O-beta-D-glucoside + H2O = luteolin + beta-D-glucose. The catalysed reaction is luteolin 4'-O-beta-D-glucoside + H2O = luteolin + beta-D-glucose. It carries out the reaction (2S)-naringenin 7-O-beta-D-glucoside + H2O = (2S)-naringenin + beta-D-glucose. The enzyme catalyses eriodictyol-7-O-beta-D-glucoside + H2O = (S)-eriodictyol + beta-D-glucose. It catalyses the reaction apigenin 7-O-beta-D-glucoside + H2O = apigenin + beta-D-glucose. The catalysed reaction is daidzein 7-O-beta-D-glucoside + H2O = daidzein + beta-D-glucose + H(+). It carries out the reaction genistein 7-O-beta-D-glucoside + H2O = genistein + beta-D-glucose. The enzyme catalyses a beta-D-galactosyl-N-acylsphingosine + H2O = a ceramide + beta-D-galactose.. It catalyses the reaction beta-D-glucosyl-(1&lt;-&gt;1')-N-hexadecanoylsphing-4-enine + H2O = N-hexadecanoylsphing-4-enine + beta-D-glucose. The catalysed reaction is beta-D-galactosyl-(1&lt;-&gt;1')-N-hexadecanoylsphing-4-enine + H2O = beta-D-galactose + N-hexadecanoylsphing-4-enine. It carries out the reaction beta-D-galactosyl-(1&lt;-&gt;1')-N-hexadecanoylsphinganine + H2O = N-hexadecanoylsphinganine + beta-D-galactose. The enzyme catalyses beta-D-glucosyl-(1&lt;-&gt;1')-N-hexadecanoylsphinganine + H2O = N-hexadecanoylsphinganine + beta-D-glucose. Its function is as follows. Broad specificity glycosidase of the intestinal brush border membrane that hydrolyzes lactose, the main sugar in mammalian milk, to produce D-glucose and D-galactose. The mature protein is composed of two domains that catalyze the hydrolysis of beta-glucopyranosides and beta-galactopyranosides, with a preference for hydrophilic aglycones (in lactose and cellobiose) for one domain and hydrophobic aglycones (in phlorizin and glycosylceramides) for the other. The sequence is that of Lactase/phlorizin hydrolase from Homo sapiens (Human).